The primary structure comprises 525 residues: Nucleolar complex protein 4 homolog (525 aa).

The next 3 helical transmembrane spans lie at 305 to 325 (AAYD…FVPI), 356 to 376 (FFHL…LVAA), and 384 to 404 (LSLT…CNLI).

The protein belongs to the CBF/MAK21 family.

It is found in the nucleus membrane. Its subcellular location is the nucleus. The protein localises to the nucleolus. In Danio rerio (Zebrafish), this protein is Nucleolar complex protein 4 homolog (noc4l).